A 190-amino-acid polypeptide reads, in one-letter code: Pyridoxal 5'-phosphate synthase subunit PdxT (190 aa).

Residue Gly46–Ser48 participates in L-glutamine binding. Cys78 functions as the Nucleophile in the catalytic mechanism. L-glutamine is bound by residues Arg108 and Ile137 to Arg138. Active-site charge relay system residues include His174 and Glu176.

This sequence belongs to the glutaminase PdxT/SNO family. In terms of assembly, in the presence of PdxS, forms a dodecamer of heterodimers. Only shows activity in the heterodimer.

The catalysed reaction is aldehydo-D-ribose 5-phosphate + D-glyceraldehyde 3-phosphate + L-glutamine = pyridoxal 5'-phosphate + L-glutamate + phosphate + 3 H2O + H(+). It carries out the reaction L-glutamine + H2O = L-glutamate + NH4(+). It participates in cofactor biosynthesis; pyridoxal 5'-phosphate biosynthesis. In terms of biological role, catalyzes the hydrolysis of glutamine to glutamate and ammonia as part of the biosynthesis of pyridoxal 5'-phosphate. The resulting ammonia molecule is channeled to the active site of PdxS. The polypeptide is Pyridoxal 5'-phosphate synthase subunit PdxT (Herpetosiphon aurantiacus (strain ATCC 23779 / DSM 785 / 114-95)).